The primary structure comprises 371 residues: Isopentenyl-diphosphate delta-isomerase (371 aa).

A substrate-binding site is contributed by 9–10; sequence RK. FMN is bound by residues threonine 66, 67–69, serine 100, and asparagine 128; that span reads GMT. 100 to 102 lines the substrate pocket; it reads SQR. Residue glutamine 167 coordinates substrate. Glutamate 168 provides a ligand contact to Mg(2+). Residues lysine 199, serine 224, threonine 229, 278–280, and 299–300 each bind FMN; these read GMR and AL.

The protein belongs to the IPP isomerase type 2 family. Homooctamer. Dimer of tetramers. The cofactor is FMN. NADPH is required as a cofactor. It depends on Mg(2+) as a cofactor.

Its subcellular location is the cytoplasm. It catalyses the reaction isopentenyl diphosphate = dimethylallyl diphosphate. Its function is as follows. Involved in the biosynthesis of isoprenoids. Catalyzes the 1,3-allylic rearrangement of the homoallylic substrate isopentenyl (IPP) to its allylic isomer, dimethylallyl diphosphate (DMAPP). This is Isopentenyl-diphosphate delta-isomerase from Pyrococcus horikoshii (strain ATCC 700860 / DSM 12428 / JCM 9974 / NBRC 100139 / OT-3).